The primary structure comprises 20 residues: Pregnancy-associated glycoprotein 71D (20 aa).

The N-linked (GlcNAc...) asparagine glycan is linked to N4.

Belongs to the peptidase A1 family. Chorionic epithelium (trophectoderm) and placental cotyledons.

It is found in the secreted. Its subcellular location is the extracellular space. This Bison bonasus (European bison) protein is Pregnancy-associated glycoprotein 71D.